A 231-amino-acid polypeptide reads, in one-letter code: Octanoyl-[acyl-carrier-protein]:protein N-octanoyltransferase LIPT2, mitochondrial (231 aa).

Residues 41–224 (GTKAGVLLVC…AFKETFKCTL (184 aa)) form the BPL/LPL catalytic domain. Lys-43 is modified (N6-succinyllysine). Substrate contacts are provided by residues 85-92 (RGGLATFH), 154-156 (AIG), and 167-169 (GLA). Cys-185 functions as the Acyl-thioester intermediate in the catalytic mechanism.

The protein belongs to the LipB family.

The protein localises to the mitochondrion. The catalysed reaction is octanoyl-[ACP] + L-lysyl-[protein] = N(6)-octanoyl-L-lysyl-[protein] + holo-[ACP] + H(+). It participates in protein modification; protein lipoylation via endogenous pathway; protein N(6)-(lipoyl)lysine from octanoyl-[acyl-carrier-protein]: step 1/2. Its function is as follows. Catalyzes the transfer of endogenously produced octanoic acid from octanoyl-acyl-carrier-protein onto the lipoyl domains of lipoate-dependent enzymes such as the protein H of the glycine cleavage system (GCSH). Lipoyl-ACP can also act as a substrate although octanoyl-ACP is likely to be the physiological substrate. The sequence is that of Octanoyl-[acyl-carrier-protein]:protein N-octanoyltransferase LIPT2, mitochondrial from Mus musculus (Mouse).